The primary structure comprises 142 residues: Large ribosomal subunit protein uL13 (142 aa).

This sequence belongs to the universal ribosomal protein uL13 family. In terms of assembly, part of the 50S ribosomal subunit.

In terms of biological role, this protein is one of the early assembly proteins of the 50S ribosomal subunit, although it is not seen to bind rRNA by itself. It is important during the early stages of 50S assembly. In Alkalilimnicola ehrlichii (strain ATCC BAA-1101 / DSM 17681 / MLHE-1), this protein is Large ribosomal subunit protein uL13.